We begin with the raw amino-acid sequence, 372 residues long: GDP-mannose 4,6 dehydratase (372 aa).

Residues methionine 1–proline 22 form a disordered region. Alanine 2 is subject to N-acetylalanine. NADP(+) is bound by residues glycine 30–aspartate 35, arginine 55–serine 58, aspartate 86–leucine 87, leucine 108–serine 112, and tyrosine 123. Threonine 155 is a catalytic residue. Active-site nucleophile residues include glutamate 157 and tyrosine 179. Residues lysine 183, histidine 209, and arginine 214 each coordinate NADP(+). Residue tyrosine 323 is modified to Phosphotyrosine.

It belongs to the NAD(P)-dependent epimerase/dehydratase family. GDP-mannose 4,6-dehydratase subfamily. NADP(+) is required as a cofactor.

It carries out the reaction GDP-alpha-D-mannose = GDP-4-dehydro-alpha-D-rhamnose + H2O. The protein operates within nucleotide-sugar biosynthesis; GDP-L-fucose biosynthesis via de novo pathway; GDP-L-fucose from GDP-alpha-D-mannose: step 1/2. Its activity is regulated as follows. Inhibited by GDP-fucose. Catalyzes the conversion of GDP-D-mannose to GDP-4-dehydro-6-deoxy-D-mannose. In Cricetulus griseus (Chinese hamster), this protein is GDP-mannose 4,6 dehydratase (GMDS).